We begin with the raw amino-acid sequence, 501 residues long: Amidophosphoribosyltransferase (501 aa).

The active-site Nucleophile is the Cys-2. In terms of domain architecture, Glutamine amidotransferase type-2 spans Cys-2–Glu-234. Mg(2+) is bound by residues Thr-303, Asp-365, and Asp-366.

This sequence in the C-terminal section; belongs to the purine/pyrimidine phosphoribosyltransferase family. Requires Mg(2+) as cofactor.

It carries out the reaction 5-phospho-beta-D-ribosylamine + L-glutamate + diphosphate = 5-phospho-alpha-D-ribose 1-diphosphate + L-glutamine + H2O. Its pathway is purine metabolism; IMP biosynthesis via de novo pathway; N(1)-(5-phospho-D-ribosyl)glycinamide from 5-phospho-alpha-D-ribose 1-diphosphate: step 1/2. In terms of biological role, catalyzes the formation of phosphoribosylamine from phosphoribosylpyrophosphate (PRPP) and glutamine. The chain is Amidophosphoribosyltransferase from Pseudomonas aeruginosa (strain ATCC 15692 / DSM 22644 / CIP 104116 / JCM 14847 / LMG 12228 / 1C / PRS 101 / PAO1).